A 453-amino-acid chain; its full sequence is Growth/differentiation factor 9 (453 aa).

The N-terminal stretch at 1–25 is a signal peptide; that stretch reads MALPNKFFLWFCCFAWLCFPISLDS. Residues 26-318 constitute a propeptide that is removed on maturation; it reads QPSRGEAQIV…EGVRLSRHRR (293 aa). Residues Asn-106, Asn-163, Asn-236, Asn-255, and Asn-269 are each glycosylated (N-linked (GlcNAc...) asparagine). The disordered stretch occupies residues 281–300; the sequence is SLHPKRKPSQDPDQKRGLSA. Asn-337 carries an N-linked (GlcNAc...) asparagine glycan. Cystine bridges form between Cys-352/Cys-418, Cys-381/Cys-450, and Cys-385/Cys-452.

Belongs to the TGF-beta family. In terms of assembly, homodimer or heterodimer (Potential). But, in contrast to other members of this family, cannot be disulfide-linked. Phosphorylated; phosphorylation is critical for GDF9 function.

It is found in the secreted. Its function is as follows. Required for ovarian folliculogenesis. This is Growth/differentiation factor 9 (GDF9) from Bos taurus (Bovine).